Here is a 156-residue protein sequence, read N- to C-terminus: 6,7-dimethyl-8-ribityllumazine synthase (156 aa).

Residues Phe23, 57-59, and 81-83 contribute to the 5-amino-6-(D-ribitylamino)uracil site; these read AFE and TVI. 86–87 is a binding site for (2S)-2-hydroxy-3-oxobutyl phosphate; the sequence is ST. Catalysis depends on His89, which acts as the Proton donor. Residue Phe114 participates in 5-amino-6-(D-ribitylamino)uracil binding. A (2S)-2-hydroxy-3-oxobutyl phosphate-binding site is contributed by Arg128.

It belongs to the DMRL synthase family. In terms of assembly, forms an icosahedral capsid composed of 60 subunits, arranged as a dodecamer of pentamers.

It catalyses the reaction (2S)-2-hydroxy-3-oxobutyl phosphate + 5-amino-6-(D-ribitylamino)uracil = 6,7-dimethyl-8-(1-D-ribityl)lumazine + phosphate + 2 H2O + H(+). It participates in cofactor biosynthesis; riboflavin biosynthesis; riboflavin from 2-hydroxy-3-oxobutyl phosphate and 5-amino-6-(D-ribitylamino)uracil: step 1/2. Functionally, catalyzes the formation of 6,7-dimethyl-8-ribityllumazine by condensation of 5-amino-6-(D-ribitylamino)uracil with 3,4-dihydroxy-2-butanone 4-phosphate. This is the penultimate step in the biosynthesis of riboflavin. This chain is 6,7-dimethyl-8-ribityllumazine synthase, found in Shouchella clausii (strain KSM-K16) (Alkalihalobacillus clausii).